A 231-amino-acid polypeptide reads, in one-letter code: Albumin-2 (231 aa).

4 Hemopexin repeats span residues 4–55, 62–112, 118–166, and 172–223; these read TGYI…FKSL, SYGV…FPFF, ENGI…FPCF, and ESGT…WPSL. The Ca(2+) site is built by asparagine 8, aspartate 66, aspartate 122, and aspartate 176.

Monomer and homodimer.

The protein localises to the cytoplasm. The protein resides in the cytosol. Functionally, may play a role in response to oxidative stress and polyamine biosynthesis. This is Albumin-2 from Pisum sativum (Garden pea).